We begin with the raw amino-acid sequence, 407 residues long: MLSSSFARNFNILEWQSKEICAKYNVAAGINLVARSPEEAAEAFRKMNLPAAVIKAQVYCGGRGKGHWLETGFKSGVHFVKSADEAAKIAKEMLGHHLVTKQTGKDGLLCQAVMLSDPVEVKRELYFAILLDRQTQSPVVIASTEGGVEIEEVAAHHPEKIHKFVLDGVEGITEEVAKNISTKLGLTGKAYDNGVVEMQKLWKLFVGSDATQVEVNPLAETTDGRIITVDSKFNFDDSAHYRQKQIFGYRDLKQVNPFEIRAEKYGLNYVPLDGNVACLVNGAGLAMATMDVIKLAGGDPANFLDLGGAASEAAVTEGFTIISQQSHVKAILVNIFGGIVRCDMVAAGVIAAFKKVGLKVPLVVRLEGTNVEAGKKLIRESGLPIISADNLTDAGEKAVKAAKGEKF.

Residues methionine 1 to asparagine 9 constitute a hydrogenosome transit peptide. Residues lysine 18–arginine 261 enclose the ATP-grasp domain. Residues lysine 55, glycine 62–glycine 64, and glutamate 124 each bind ATP. Residues asparagine 216 and aspartate 230 each coordinate Mg(2+). Substrate contacts are provided by residues asparagine 281 and glycine 338–valine 340.

This sequence belongs to the succinate/malate CoA ligase beta subunit family. In terms of assembly, heterodimer of an alpha and a beta subunit. It depends on Mg(2+) as a cofactor.

It is found in the hydrogenosome. The enzyme catalyses succinate + ATP + CoA = succinyl-CoA + ADP + phosphate. The protein operates within carbohydrate metabolism; tricarboxylic acid cycle; succinate from succinyl-CoA (ligase route): step 1/1. In terms of biological role, succinyl-CoA synthetase functions in the citric acid cycle (TCA), coupling the hydrolysis of succinyl-CoA to the synthesis of ATP and thus represents the only step of substrate-level phosphorylation in the TCA. The beta subunit provides nucleotide specificity of the enzyme and binds the substrate succinate, while the binding sites for coenzyme A and phosphate are found in the alpha subunit. This chain is Succinate--CoA ligase [ADP-forming] subunit beta, hydrogenosomal, found in Trichomonas vaginalis.